The chain runs to 348 residues: Protein RecA (348 aa).

ATP is bound at residue 64 to 71 (GPESSGKT).

The protein belongs to the RecA family. In terms of assembly, monomer; forms higher-order oligomers. Interacts with RecU. Interacts with DprA (smf). Interacts with RecD2.

It localises to the cytoplasm. The protein localises to the nucleoid. Its function is as follows. Multifunctional protein involved in homologous recombination, DNA repair and competence. Can catalyze the hydrolysis of (d)ATP in the presence of single-stranded (ss)DNA; prefers dATP at least in vitro, catalyzes the dATP-dependent uptake of ssDNA by duplex DNA, and the dATP-dependent hybridization of homologous ssDNA (strand exchange). RecA-ATP cannot catalyze homologous DNA strand exchange; SsbA and DprA activate strand exchange by RecA-ATP. It interacts with LexA causing its activation and leading to its autocatalytic cleavage. Hydrolysis of ATP in the presence of ssDNA is partially inhibited by RecU. Required for DNA transformation; protects transforming DNA from degradation, possibly in combination with DprA. Blocks replication of both leading and lagging strand DNA in the presence of RecO and SsbA; RecD2 is able to overcome this blockage. Functionally, recruited to repair centers (RCs), foci that are the site of double-stranded DNA break(s), after RecN. Concomitant with the appearance of RecO at the RCs, RecA forms threads that extend from RCs toward the opposite cell half, possibly searching for sequence homology along the sister chromosome. The threads disappear after about 2 hours. Thread formation is absolutely dependent on RecJ or AadAB. Thread formation is also dependent on RarA. This Bacillus subtilis (strain 168) protein is Protein RecA.